Reading from the N-terminus, the 288-residue chain is Inorganic pyrophosphatase (288 aa).

Position 80 (R80) interacts with diphosphate. Mg(2+) contacts are provided by D117, D122, and D154. The tract at residues 252-271 is disordered; the sequence is TPSYSDAAAQEIPSASPAPA. The segment covering 258–271 has biased composition (low complexity); sequence AAAQEIPSASPAPA.

This sequence belongs to the PPase family. The cofactor is Mg(2+).

The protein resides in the cytoplasm. The catalysed reaction is diphosphate + H2O = 2 phosphate + H(+). This is Inorganic pyrophosphatase (IPP1) from Candida albicans (strain SC5314 / ATCC MYA-2876) (Yeast).